We begin with the raw amino-acid sequence, 326 residues long: MATH domain and coiled-coil domain-containing protein At3g58370 (326 aa).

Positions 7–133 constitute an MATH domain; it reads DNKFTWVIKN…NGEVKIVVEI (127 aa). Residues 259 to 312 are a coiled coil; it reads LRLDWLEKKLAEVKAKKKKVETGKARLQRAEEELQKLNQKCLELKAFLEKENAD.

The sequence is that of MATH domain and coiled-coil domain-containing protein At3g58370 from Arabidopsis thaliana (Mouse-ear cress).